We begin with the raw amino-acid sequence, 115 residues long: Large ribosomal subunit protein bL20 (115 aa).

Belongs to the bacterial ribosomal protein bL20 family.

Functionally, binds directly to 23S ribosomal RNA and is necessary for the in vitro assembly process of the 50S ribosomal subunit. It is not involved in the protein synthesizing functions of that subunit. This Mycoplasmoides gallisepticum (strain R(low / passage 15 / clone 2)) (Mycoplasma gallisepticum) protein is Large ribosomal subunit protein bL20.